The sequence spans 379 residues: Zinc metalloproteinase nas-20 (379 aa).

A signal peptide spans 1-20; it reads MKITVNFLLVALIGVPSVLS. A propeptide spanning residues 21-29 is cleaved from the precursor; it reads DRHITRDKR. Positions 30-208 constitute a Peptidase M12A domain; the sequence is QAMRDYAKWE…VLLNKFYGCN (179 aa). Asn67 carries N-linked (GlcNAc...) asparagine glycosylation. 4 disulfide bridges follow: Cys70–Cys207, Cys91–Cys111, Cys209–Cys229, and Cys234–Cys243. A Zn(2+)-binding site is contributed by His119. Glu120 is a catalytic residue. Positions 123 and 129 each coordinate Zn(2+). A glycan (N-linked (GlcNAc...) asparagine) is linked at Asn185. The EGF-like domain maps to 203-244; it reads KFYGCNCDNHPRKLDCKNGGYQNPANCEECLCTDGFNGQLCD. Asn337 and Asn370 each carry an N-linked (GlcNAc...) asparagine glycan.

Zn(2+) serves as cofactor.

It localises to the secreted. Metalloprotease. The polypeptide is Zinc metalloproteinase nas-20 (nas-20) (Caenorhabditis elegans).